The following is a 430-amino-acid chain: Corticosteroid-binding globulin (430 aa).

Residues 1 to 22 (MLLTLYTCLLWLSTSGLWTIQA) form the signal peptide. N-linked (GlcNAc...) asparagine glycosylation is found at asparagine 119, asparagine 175, and asparagine 243. Position 253 (glutamine 253) interacts with cortisol. An N-linked (GlcNAc...) asparagine glycan is attached at asparagine 259. Glutamine 285 is a cortisol binding site. Asparagine 326 carries an N-linked (GlcNAc...) asparagine glycan. Residue tryptophan 392 participates in cortisol binding.

Belongs to the serpin family. As to expression, expressed by the liver; secreted in plasma.

Its subcellular location is the secreted. Functionally, major transport protein for glucocorticoids and progestins in the blood of almost all vertebrate species. This chain is Corticosteroid-binding globulin (SERPINA6), found in Ovis aries (Sheep).